Consider the following 389-residue polypeptide: tRNA-specific 2-thiouridylase MnmA (389 aa).

Residues 35–42 (GMSGGVDS) and Met61 each bind ATP. The segment at 121 to 123 (NPD) is interaction with target base in tRNA. Cys126 acts as the Nucleophile in catalysis. An intrachain disulfide couples Cys126 to Cys223. Residue Gly151 participates in ATP binding. An interaction with tRNA region spans residues 173–175 (KDQ). Cys223 (cysteine persulfide intermediate) is an active-site residue. Residues 335–336 (RY) form an interaction with tRNA region.

Belongs to the MnmA/TRMU family.

The protein resides in the cytoplasm. It catalyses the reaction S-sulfanyl-L-cysteinyl-[protein] + uridine(34) in tRNA + AH2 + ATP = 2-thiouridine(34) in tRNA + L-cysteinyl-[protein] + A + AMP + diphosphate + H(+). Functionally, catalyzes the 2-thiolation of uridine at the wobble position (U34) of tRNA, leading to the formation of s(2)U34. In Actinobacillus succinogenes (strain ATCC 55618 / DSM 22257 / CCUG 43843 / 130Z), this protein is tRNA-specific 2-thiouridylase MnmA.